The primary structure comprises 663 residues: UvrABC system protein B (663 aa).

One can recognise a Helicase ATP-binding domain in the interval 26–414; it reads DGLESGLAKQ…DNVAEQVVRP (389 aa). 39 to 46 is an ATP binding site; the sequence is GVTGSGKT. Positions 92–115 match the Beta-hairpin motif; sequence YYDYYQPEAYVPASDTFIEKDASI. Residues 430-596 enclose the Helicase C-terminal domain; the sequence is QVDDLMSEIR…GINKSVEDIL (167 aa). The UVR domain maps to 624–659; it reads AKQINALEKQMYAHAQNMEFELAAKIRDEYLLLKEQ.

It belongs to the UvrB family. In terms of assembly, forms a heterotetramer with UvrA during the search for lesions. Interacts with UvrC in an incision complex.

Its subcellular location is the cytoplasm. Functionally, the UvrABC repair system catalyzes the recognition and processing of DNA lesions. A damage recognition complex composed of 2 UvrA and 2 UvrB subunits scans DNA for abnormalities. Upon binding of the UvrA(2)B(2) complex to a putative damaged site, the DNA wraps around one UvrB monomer. DNA wrap is dependent on ATP binding by UvrB and probably causes local melting of the DNA helix, facilitating insertion of UvrB beta-hairpin between the DNA strands. Then UvrB probes one DNA strand for the presence of a lesion. If a lesion is found the UvrA subunits dissociate and the UvrB-DNA preincision complex is formed. This complex is subsequently bound by UvrC and the second UvrB is released. If no lesion is found, the DNA wraps around the other UvrB subunit that will check the other stand for damage. The polypeptide is UvrABC system protein B (Legionella pneumophila (strain Lens)).